Consider the following 308-residue polypeptide: MSQAKHVAVLKGGWSAEREVSLVSGKGCAEALRKHGYRVTEIDAGRDLADQILKVKPDVAFNALHGRWGEDGCVQGLLEILRVPYTHSGVLASALAMHKERAKFVFRAAGLPVAESVVVPREQAAHGHVMDPPYVIKPVSEGSSVGVFIVRAGDNRPPAELTSAEWNLGDEVMAERYIAGRELTCAVMGEEIFGVTEIIANTTFYDYEAKYQTGGSRHIIPAPIDADIYAEVQRVTLAAHKALGCRGVSRADFRFDDTRPGKPELILLEVNTQPGMTPTSLVPELANLAGYSYGELVSWMVEEASCDR.

The region spanning 103-302 is the ATP-grasp domain; sequence KFVFRAAGLP…YGELVSWMVE (200 aa). Residue 130-184 coordinates ATP; it reads MDPPYVIKPVSEGSSVGVFIVRAGDNRPPAELTSAEWNLGDEVMAERYIAGRELT. The Mg(2+) site is built by Asp-252, Glu-269, and Asn-271.

It belongs to the D-alanine--D-alanine ligase family. Mg(2+) serves as cofactor. Requires Mn(2+) as cofactor.

It is found in the cytoplasm. The enzyme catalyses 2 D-alanine + ATP = D-alanyl-D-alanine + ADP + phosphate + H(+). It functions in the pathway cell wall biogenesis; peptidoglycan biosynthesis. Its function is as follows. Cell wall formation. This chain is D-alanine--D-alanine ligase, found in Parvibaculum lavamentivorans (strain DS-1 / DSM 13023 / NCIMB 13966).